A 61-amino-acid polypeptide reads, in one-letter code: UPF0181 protein Ent638_2380 (61 aa).

Belongs to the UPF0181 family.

The sequence is that of UPF0181 protein Ent638_2380 from Enterobacter sp. (strain 638).